An 819-amino-acid chain; its full sequence is Eukaryotic translation initiation factor 3 subunit C (819 aa).

A disordered region spans residues 1 to 106 (MSRFFLKTYE…DSSDEEDGKK (106 aa)). 2 stretches are compositionally biased toward acidic residues: residues 17–41 (GEEE…ELSD) and 47–59 (DSDE…EDND). Positions 620-795 (FHQHINLDLI…EYIIFERGEE (176 aa)) constitute a PCI domain.

It belongs to the eIF-3 subunit C family. As to quaternary structure, component of the eukaryotic translation initiation factor 3 (eIF-3) complex.

The protein resides in the cytoplasm. Its function is as follows. Component of the eukaryotic translation initiation factor 3 (eIF-3) complex, which is involved in protein synthesis of a specialized repertoire of mRNAs and, together with other initiation factors, stimulates binding of mRNA and methionyl-tRNAi to the 40S ribosome. The eIF-3 complex specifically targets and initiates translation of a subset of mRNAs involved in cell proliferation. The chain is Eukaryotic translation initiation factor 3 subunit C from Kluyveromyces lactis (strain ATCC 8585 / CBS 2359 / DSM 70799 / NBRC 1267 / NRRL Y-1140 / WM37) (Yeast).